The chain runs to 669 residues: Methionine--tRNA ligase (669 aa).

A 'HIGH' region motif is present at residues 14–24; sequence YYPSGKLHIGN. Residue histidine 161 participates in Zn(2+) binding. The short motif at 309 to 313 is the 'KMSKS' region element; the sequence is KMSKS. ATP is bound at residue lysine 312. In terms of domain architecture, tRNA-binding spans 566 to 669; sequence DFDKVELKVA…KEMPNGAGIA (104 aa).

Belongs to the class-I aminoacyl-tRNA synthetase family. MetG type 2B subfamily. Homodimer.

The protein localises to the cytoplasm. The catalysed reaction is tRNA(Met) + L-methionine + ATP = L-methionyl-tRNA(Met) + AMP + diphosphate. Its function is as follows. Is required not only for elongation of protein synthesis but also for the initiation of all mRNA translation through initiator tRNA(fMet) aminoacylation. The polypeptide is Methionine--tRNA ligase (Enterococcus faecalis (strain ATCC 700802 / V583)).